Consider the following 345-residue polypeptide: NADH-quinone oxidoreductase subunit H (345 aa).

Helical transmembrane passes span 15–35 (MLLQGLAVIAFVMGSLIFMVY), 82–102 (FVYFLAPFLSMMLALFAFVVI), 115–135 (VGILFIFAASSLEVYGVIMGG), 161–181 (LGLIIIGIIISTGSMNLTAIV), 190–210 (LLNWYWLPHLPMVVLFFVSAL), 240–262 (YLLFMAGEYIAMYLMCALLSLLF), 278–298 (WWMVIKMWFWFYMFAMVKAIV), and 309–329 (IGWKVFLPLSLGWVVLVAILA).

It belongs to the complex I subunit 1 family. NDH-1 is composed of at least 14 different subunits, Nqo1 to Nqo14. The complex has a L-shaped structure, with the hydrophobic arm (subunits Nqo7, Nqo8, Nqo10 to Nqo14) embedded in the inner membrane and the hydrophilic peripheral arm (subunits Nqo1 to Nqo6, Nqo9) protruding into the bacterial cytoplasm. The hydrophilic domain contains all the redox centers. NADH-quinone oxidoreductase forms a supercomplex with ubiquinol-cytochrome c reductase complex (complex III or cytochrome b-c1 complex) and cytochrome c oxidase (complex IV), which stabilizes the NADH-quinone oxidoreductase complex.

It localises to the cell inner membrane. The enzyme catalyses a quinone + NADH + 5 H(+)(in) = a quinol + NAD(+) + 4 H(+)(out). In terms of biological role, NDH-1 shuttles electrons from NADH, via FMN and iron-sulfur (Fe-S) centers, to quinones in the respiratory chain. The immediate electron acceptor for the enzyme in this species is believed to be ubiquinone. Couples the redox reaction to proton translocation (for every two electrons transferred, four hydrogen ions are translocated across the cytoplasmic membrane), and thus conserves the redox energy in a proton gradient. This subunit may bind ubiquinone. This is NADH-quinone oxidoreductase subunit H from Paracoccus denitrificans (strain Pd 1222).